Here is a 299-residue protein sequence, read N- to C-terminus: Oxygen-dependent coproporphyrinogen-III oxidase (299 aa).

Ser92 contacts substrate. His96 and His106 together coordinate a divalent metal cation. The Proton donor role is filled by His106. 108–110 (NVR) contributes to the substrate binding site. A divalent metal cation contacts are provided by His145 and His175. Residues 240–275 (YVEFNLVWDRGTLFGLQTGGRTESILMSMPPLVRWE) form an important for dimerization region. Substrate is bound at residue 258–260 (GGR).

This sequence belongs to the aerobic coproporphyrinogen-III oxidase family. As to quaternary structure, homodimer. The cofactor is a divalent metal cation.

The protein resides in the cytoplasm. The catalysed reaction is coproporphyrinogen III + O2 + 2 H(+) = protoporphyrinogen IX + 2 CO2 + 2 H2O. It functions in the pathway porphyrin-containing compound metabolism; protoporphyrin-IX biosynthesis; protoporphyrinogen-IX from coproporphyrinogen-III (O2 route): step 1/1. Its function is as follows. Involved in the heme biosynthesis. Catalyzes the aerobic oxidative decarboxylation of propionate groups of rings A and B of coproporphyrinogen-III to yield the vinyl groups in protoporphyrinogen-IX. In Salmonella dublin (strain CT_02021853), this protein is Oxygen-dependent coproporphyrinogen-III oxidase.